The primary structure comprises 156 residues: ATP synthase subunit b (156 aa).

Residues 7 to 27 form a helical membrane-spanning segment; it reads LIAQFVVFFILAGFTMKFVWP.

The protein belongs to the ATPase B chain family. F-type ATPases have 2 components, F(1) - the catalytic core - and F(0) - the membrane proton channel. F(1) has five subunits: alpha(3), beta(3), gamma(1), delta(1), epsilon(1). F(0) has three main subunits: a(1), b(2) and c(10-14). The alpha and beta chains form an alternating ring which encloses part of the gamma chain. F(1) is attached to F(0) by a central stalk formed by the gamma and epsilon chains, while a peripheral stalk is formed by the delta and b chains.

The protein resides in the cell inner membrane. Functionally, f(1)F(0) ATP synthase produces ATP from ADP in the presence of a proton or sodium gradient. F-type ATPases consist of two structural domains, F(1) containing the extramembraneous catalytic core and F(0) containing the membrane proton channel, linked together by a central stalk and a peripheral stalk. During catalysis, ATP synthesis in the catalytic domain of F(1) is coupled via a rotary mechanism of the central stalk subunits to proton translocation. Its function is as follows. Component of the F(0) channel, it forms part of the peripheral stalk, linking F(1) to F(0). The chain is ATP synthase subunit b from Herminiimonas arsenicoxydans.